A 255-amino-acid polypeptide reads, in one-letter code: Zinc D-Ala-D-Ala carboxypeptidase (255 aa).

Positions 1 to 42 (MRPRPIRLLLTALVGAGLAFAPVSAVAAPTATASASADVGAL) are cleaved as a signal peptide. D43 is modified (blocked amino end (Asp)). 2 cysteine pairs are disulfide-bonded: C45–C123 and C136–C184. Position 180 (R180) interacts with substrate. A Zn(2+)-binding site is contributed by H196. C212 and C253 are oxidised to a cystine. Residue H234 is the Proton donor of the active site. Zn(2+)-binding residues include H237 and H239.

The protein belongs to the peptidase M15 family. The cofactor is Zn(2+). Post-translationally, the N-terminus is partially blocked as a result of the cyclization of the first two amino acids into anhydroaspartylglycine imide.

The protein localises to the secreted. The catalysed reaction is Cleavage of the bond: (Ac)2-L-lysyl-D-alanyl-|-D-alanine.. This enzyme catalyzes carboxypeptidation and transpeptidation reactions involved in bacterial cell wall metabolism. It effectively catalyzes the transfer of the N-alpha, N-epsilon-diacetyl-L-lysyl-D-alanyl electrophilic group of the standard tripeptide substrate N-alpha,N-epsilon-diacetyl-L-lysyl-D-alanyl-D-alanine to water. It also performs a weak beta-lactamase activity, hydrolyzing penicillin into penicilloate at a very low rate. The polypeptide is Zinc D-Ala-D-Ala carboxypeptidase (Streptomyces albus G).